A 412-amino-acid chain; its full sequence is Tryptophan 2,3-dioxygenase (412 aa).

Residues Phe79–His83, Tyr146, and Arg150 contribute to the substrate site. His346 is a binding site for heme. Thr360 lines the substrate pocket.

Belongs to the tryptophan 2,3-dioxygenase family. Homotetramer. The cofactor is heme.

The catalysed reaction is L-tryptophan + O2 = N-formyl-L-kynurenine. It participates in amino-acid degradation; L-tryptophan degradation via kynurenine pathway; L-kynurenine from L-tryptophan: step 1/2. In terms of biological role, heme-dependent dioxygenase that catalyzes the oxidative cleavage of the L-tryptophan (L-Trp) pyrrole ring and converts L-tryptophan to N-formyl-L-kynurenine. Catalyzes the oxidative cleavage of the indole moiety. The polypeptide is Tryptophan 2,3-dioxygenase (Sorangium cellulosum (strain So ce56) (Polyangium cellulosum (strain So ce56))).